A 145-amino-acid chain; its full sequence is Large ribosomal subunit protein uL16 (145 aa).

The span at 1 to 21 (MLVPTRVKHRKQHRGRMHGKA) shows a compositional bias: basic residues. The disordered stretch occupies residues 1-22 (MLVPTRVKHRKQHRGRMHGKAT).

The protein belongs to the universal ribosomal protein uL16 family. Part of the 50S ribosomal subunit.

Binds 23S rRNA and is also seen to make contacts with the A and possibly P site tRNAs. The protein is Large ribosomal subunit protein uL16 of Desulfitobacterium hafniense (strain Y51).